The sequence spans 169 residues: Ribosome maturation factor RimM (169 aa).

The PRC barrel domain occupies 97 to 169 (EDEVYFKDLI…KIVVDWEYDY (73 aa)).

This sequence belongs to the RimM family. As to quaternary structure, binds ribosomal protein uS19.

It is found in the cytoplasm. An accessory protein needed during the final step in the assembly of 30S ribosomal subunit, possibly for assembly of the head region. Essential for efficient processing of 16S rRNA. May be needed both before and after RbfA during the maturation of 16S rRNA. It has affinity for free ribosomal 30S subunits but not for 70S ribosomes. This Francisella tularensis subsp. tularensis (strain WY96-3418) protein is Ribosome maturation factor RimM.